Reading from the N-terminus, the 549-residue chain is Threonine--tRNA ligase catalytic subunit (549 aa).

A catalytic region spans residues 142-437; that stretch reads DHRIIGDRLD…LLEHFRGKLP (296 aa). Zn(2+)-binding residues include Cys235, His286, and His414.

Belongs to the class-II aminoacyl-tRNA synthetase family. As to quaternary structure, homodimer. Probably interacts with its editing subunit. The cofactor is Zn(2+).

The protein resides in the cytoplasm. It carries out the reaction tRNA(Thr) + L-threonine + ATP = L-threonyl-tRNA(Thr) + AMP + diphosphate + H(+). Functionally, catalyzes the attachment of threonine to tRNA(Thr) in a two-step reaction: L-threonine is first activated by ATP to form Thr-AMP and then transferred to the acceptor end of tRNA(Thr). Also activates L-serine and transfers it to tRNA(Thr) but cannot deacylate incorrectly charged amino acid; unlike most archaea the editing function is found in a freestanding protein. The sequence is that of Threonine--tRNA ligase catalytic subunit from Sulfolobus acidocaldarius (strain ATCC 33909 / DSM 639 / JCM 8929 / NBRC 15157 / NCIMB 11770).